We begin with the raw amino-acid sequence, 945 residues long: Soluble guanylate cyclase gcy-33 (945 aa).

His-104 serves as a coordination point for heme. A coiled-coil region spans residues 388–413 (SEVLTEMTREISEAKKTARTLLTQMM). A Guanylate cyclase domain is found at 437-567 (SIGFIRVCDF…DTVNTASRME (131 aa)). 2 disordered regions span residues 639 to 679 (KEAE…LSGS) and 706 to 930 (QDEN…KCED). Positions 661 to 679 (SLGESIDSSSSRRGSLSGS) are enriched in low complexity. The span at 711 to 720 (RPPTWSASHS) shows a compositional bias: polar residues. Residues 721-731 (QDIRKPRKTES) are compositionally biased toward basic and acidic residues. Residues 732–744 (KITLNSRLSSSDL) show a composition bias toward polar residues. Composition is skewed to basic and acidic residues over residues 750 to 759 (ETSKDSDGET) and 766 to 804 (ELKE…DHVS). Positions 763–802 (TSSELKEVNRIREEALAQEKEEERTTKEENQKIEEVGEDH) form a coiled coil. A compositionally biased stretch (polar residues) spans 817-828 (GDNNISFSQMPS). A compositionally biased stretch (basic and acidic residues) spans 851-861 (ISKKKLEKEDS). The segment covering 862-884 (NSSMSSLDERTTVSAKPTTTRRL) has biased composition (polar residues). Positions 886-896 (NQKDLEKEKKR) are enriched in basic and acidic residues. Residues 898–911 (SMAGSSVTSSSAHS) are compositionally biased toward low complexity. Residues 916–930 (SKKDTRDKSRCKCED) are compositionally biased toward basic and acidic residues.

This sequence belongs to the adenylyl cyclase class-4/guanylyl cyclase family. As to quaternary structure, heterodimer; with other soluble guanylate cyclases. Requires heme as cofactor. As to expression, expressed in BAG sensory neuron.

The protein localises to the cytoplasm. The catalysed reaction is GTP = 3',5'-cyclic GMP + diphosphate. Its activity is regulated as follows. May be regulated by molecular oxygen. Probably not activated by nitric oxide (NO). Functionally, synthesizes cyclic GMP (cGMP) from GTP. May be involved in sensitivity to quinine by regulating egl-4 activity through the production of cGMP. This chain is Soluble guanylate cyclase gcy-33 (gcy-33), found in Caenorhabditis elegans.